We begin with the raw amino-acid sequence, 459 residues long: Polycomb protein mes-6 (459 aa).

5 WD repeats span residues 146 to 186, 192 to 231, 305 to 346, 370 to 409, and 415 to 454; these read SVGW…CLIV, CHAG…VKEH, MHSD…GEVE, SGSA…ETNP, and VGSR…VDAK.

This sequence belongs to the WD repeat ESC family. In terms of assembly, interacts directly with the N-terminal domain of mes-2. Forms a heterotrimeric complex with mes-2 and mes-3. Does not interact with mes-4. In terms of tissue distribution, in adults, it is predominantly expressed in the germline, and weakly expressed in intestinal cells.

It is found in the nucleus. Functionally, polycomb group (PcG) protein. PcG proteins act by forming multiprotein complexes, which are required to maintain the transcriptionally repressive state of homeotic genes throughout development. In association with the nfya-1-NF-Y complex, may play a role in repressing the expression of the homeobox protein egl-5 in tissues such as the head. PcG proteins are not required to initiate repression, but to maintain it during later stages of development. The mes-2/mes-3/mes-6 complex may participate in the global inactivation of the X chromosomes in germline cells. The complex may act via methylation of histone H3 'Lys-27', rendering chromatin heritably changed in its expressibility. This complex is required to exclude mes-4 from the inactivated X-chromosomes in germline cells. Required for small-RNA-induced H3K27 trimethylation. The sequence is that of Polycomb protein mes-6 from Caenorhabditis elegans.